Consider the following 366-residue polypeptide: Peptide chain release factor 2 (366 aa).

Glutamine 249 is subject to N5-methylglutamine.

It belongs to the prokaryotic/mitochondrial release factor family. In terms of processing, methylated by PrmC. Methylation increases the termination efficiency of RF2.

Its subcellular location is the cytoplasm. Functionally, peptide chain release factor 2 directs the termination of translation in response to the peptide chain termination codons UGA and UAA. This is Peptide chain release factor 2 from Petrotoga mobilis (strain DSM 10674 / SJ95).